We begin with the raw amino-acid sequence, 69 residues long: DNA-directed RNA polymerase subunit epsilon (69 aa).

This sequence belongs to the RNA polymerase subunit epsilon family. In terms of assembly, RNAP is composed of a core of 2 alpha, a beta and a beta' subunit. The core is associated with a delta subunit, and at least one of epsilon or omega. When a sigma factor is associated with the core the holoenzyme is formed, which can initiate transcription.

The enzyme catalyses RNA(n) + a ribonucleoside 5'-triphosphate = RNA(n+1) + diphosphate. In terms of biological role, a non-essential component of RNA polymerase (RNAP). The polypeptide is DNA-directed RNA polymerase subunit epsilon (Geobacillus sp. (strain WCH70)).